The chain runs to 310 residues: Hairy/enhancer-of-split related with YRPW motif-like protein (310 aa).

The segment at 1 to 21 (MKRPHDYSSPDSDTDELIDVG) is disordered. A compositionally biased stretch (acidic residues) spans 12-21 (SDTDELIDVG). Positions 43–98 (ARKKRRGIIEKRRRDRINHSLSELRRLVPSAFEKQGSSKLEKAEILQMTVDHLKLL) constitute a bHLH domain. One can recognise an Orange domain in the interval 116-152 (YRTLGFRECVGEVVRYLSSLEGVESSDPIGARLVSHL). 2 stretches are compositionally biased toward low complexity: residues 182-192 (LQAASPPASST) and 261-273 (PSSS…SSPP). Disordered regions lie at residues 182–208 (LQAA…HGTA) and 248–310 (HRLQ…IGAF). Polar residues predominate over residues 293–302 (LSSSSKSAQA).

The protein belongs to the HEY family.

The protein localises to the nucleus. Transcriptional repressor which functions as a downstream effector of Notch signaling. This chain is Hairy/enhancer-of-split related with YRPW motif-like protein (heyl), found in Danio rerio (Zebrafish).